The sequence spans 99 residues: Integration host factor subunit alpha (99 aa).

Residues 49–70 are disordered; that stretch reads FGNFDLRDKNQRPGRNPKTGED.

Belongs to the bacterial histone-like protein family. In terms of assembly, heterodimer of an alpha and a beta chain.

Functionally, this protein is one of the two subunits of integration host factor, a specific DNA-binding protein that functions in genetic recombination as well as in transcriptional and translational control. In Cronobacter sakazakii (strain ATCC BAA-894) (Enterobacter sakazakii), this protein is Integration host factor subunit alpha.